A 164-amino-acid chain; its full sequence is Putative pre-16S rRNA nuclease (164 aa).

It belongs to the YqgF nuclease family.

It is found in the cytoplasm. Functionally, could be a nuclease involved in processing of the 5'-end of pre-16S rRNA. The protein is Putative pre-16S rRNA nuclease of Caulobacter sp. (strain K31).